We begin with the raw amino-acid sequence, 358 residues long: Neutral protease 2 homolog PABG_02362 (358 aa).

The first 19 residues, 1-19, serve as a signal peptide directing secretion; the sequence is MRRVSGILAVAAFTISAFA. Positions 20-182 are excised as a propeptide; sequence GVIQPVAKDA…FAAMNQFVKI (163 aa). Cystine bridges form between C188-C259 and C266-C284. Residue N249 is glycosylated (N-linked (GlcNAc...) asparagine). H309 provides a ligand contact to Zn(2+). E310 is an active-site residue. 2 residues coordinate Zn(2+): H313 and D324.

Belongs to the peptidase M35 family. Zn(2+) serves as cofactor.

It is found in the secreted. The enzyme catalyses Preferential cleavage of bonds with hydrophobic residues in P1'. Also 3-Asn-|-Gln-4 and 8-Gly-|-Ser-9 bonds in insulin B chain.. Functionally, secreted metalloproteinase that allows assimilation of proteinaceous substrates. Shows high activities on basic nuclear substrates such as histone and protamine. The polypeptide is Neutral protease 2 homolog PABG_02362 (Paracoccidioides brasiliensis (strain Pb03)).